Reading from the N-terminus, the 224-residue chain is Ribose-5-phosphate isomerase A (224 aa).

Residues 26–29 (TGST), 82–85 (DGAD), and 95–98 (KGGG) each bind substrate. Glutamate 104 serves as the catalytic Proton acceptor. A substrate-binding site is contributed by lysine 122.

Belongs to the ribose 5-phosphate isomerase family. Homodimer.

The catalysed reaction is aldehydo-D-ribose 5-phosphate = D-ribulose 5-phosphate. It functions in the pathway carbohydrate degradation; pentose phosphate pathway; D-ribose 5-phosphate from D-ribulose 5-phosphate (non-oxidative stage): step 1/1. Its function is as follows. Catalyzes the reversible conversion of ribose-5-phosphate to ribulose 5-phosphate. This Streptococcus suis (strain 98HAH33) protein is Ribose-5-phosphate isomerase A.